A 406-amino-acid polypeptide reads, in one-letter code: Cysteine desulfurase (406 aa).

The residue at position 226 (lysine 226) is an N6-(pyridoxal phosphate)lysine. The active-site Cysteine persulfide intermediate is cysteine 364.

Belongs to the class-V pyridoxal-phosphate-dependent aminotransferase family. Csd subfamily. Homodimer. Interacts with SufE and the SufBCD complex composed of SufB, SufC and SufD. The interaction with SufE is required to mediate the direct transfer of the sulfur atom from the S-sulfanylcysteine. Requires pyridoxal 5'-phosphate as cofactor.

It is found in the cytoplasm. It catalyses the reaction (sulfur carrier)-H + L-cysteine = (sulfur carrier)-SH + L-alanine. It carries out the reaction L-selenocysteine + AH2 = hydrogenselenide + L-alanine + A + H(+). Its pathway is cofactor biosynthesis; iron-sulfur cluster biosynthesis. Functionally, cysteine desulfurases mobilize the sulfur from L-cysteine to yield L-alanine, an essential step in sulfur metabolism for biosynthesis of a variety of sulfur-containing biomolecules. Component of the suf operon, which is activated and required under specific conditions such as oxidative stress and iron limitation. Acts as a potent selenocysteine lyase in vitro, that mobilizes selenium from L-selenocysteine. Selenocysteine lyase activity is however unsure in vivo. This is Cysteine desulfurase (sufS) from Shigella flexneri.